The sequence spans 108 residues: Resistin (108 aa).

Positions 1–18 (MKALCLLLLPVLGLLVSS) are cleaved as a signal peptide. Disulfide bonds link Cys-51–Cys-104, Cys-63–Cys-103, Cys-72–Cys-89, Cys-74–Cys-91, and Cys-78–Cys-93.

The protein belongs to the resistin/FIZZ family. In terms of assembly, homodimer; disulfide-linked. Interacts with DEFA1. As to expression, expressed in white adipose tissue (at protein level). Widely expressed, with particularly strong expression in lung, bone marrow, breast and peripheral blood. Expressed strongly in bone marrow and at lower levels in lung, but not detected in other tissues. Isoform 2 is detected in adipose tissue, bone marrow, brain, lung, peripheral blood, placenta and thymus.

Its subcellular location is the secreted. In terms of biological role, hormone that seems to suppress insulin ability to stimulate glucose uptake into adipose cells. Potentially links obesity to diabetes. Promotes chemotaxis in myeloid cells. The protein is Resistin (RETN) of Homo sapiens (Human).